Consider the following 189-residue polypeptide: MDVILLERVAKLGHMGDIVRVKNGYARNFLLPGGKALRATEANKKHFESQRAHLETRNQELRDQAAAIGEKLDGQTFVIIRQAGETGQLYGSVSPRDIAEAAIAAGFDVHRNQIALTTPIKTIGLHEVPVVLHPEVSVNVTVNIARSPVEAERQAKGEEINVVEETNLDELGLEIGAALADAGGSLGDR.

It belongs to the bacterial ribosomal protein bL9 family.

Its function is as follows. Binds to the 23S rRNA. The chain is Large ribosomal subunit protein bL9 from Beijerinckia indica subsp. indica (strain ATCC 9039 / DSM 1715 / NCIMB 8712).